The primary structure comprises 602 residues: Protein indeterminate-domain 5, chloroplastic (602 aa).

Composition is skewed to low complexity over residues 1-10 and 21-30; these read MAASSSSAAS and HLLPPNSSAA. The N-terminal 50 residues, 1–50, are a transit peptide targeting the chloroplast; it reads MAASSSSAASFFGVRQDDQSHLLPPNSSAAAPPPPPPHHQAPLPPLEAPP. The disordered stretch occupies residues 1-65; the sequence is MAASSSSAAS…NQPRTPNSDA (65 aa). The span at 31-48 shows a compositional bias: pro residues; it reads APPPPPPHHQAPLPPLEA. T60 bears the Phosphothreonine mark. S71 is subject to Phosphoserine. C2H2-type zinc fingers lie at residues 81 to 103 and 122 to 152; these read FICEVCNKGFQREQNLQLHRRGH and YLCPEPSCVHHDPSRALGDLTGIKKHYYRKH. The C2H2-type 2; degenerate zinc finger occupies 157–180; that stretch reads WKCDKCSKRYAVQSDWKAHSKTCG. Zn(2+) contacts are provided by C159, C162, H175, C179, C186, C188, H201, and C205. The segment at 184–207 adopts a CCHC-type 2; atypical zinc-finger fold; sequence YRCDCGTLFSRRDSFITHRAFCDA. The interval 194-206 is SHR-binding; that stretch reads RRDSFITHRAFCD. Disordered regions lie at residues 443 to 467 and 537 to 602; these read KAAQMGSTSSNNNNGSNTNNNNNAS and KSMS…HASF. Composition is skewed to low complexity over residues 448-467, 546-560, and 570-579; these read GSTSSNNNNGSNTNNNNNAS, QQQQQQQQQQQQQQQ, and SSSDSADRSS.

As to quaternary structure, binds to RGA and SCL3 competitively. As to expression, highly expressed in leaf tissues.

It localises to the plastid. Its subcellular location is the chloroplast. Functionally, transcription factor acting as a positive regulator of the starch synthase SS4. Controls chloroplast development and starch granule formation. Binds DNA via its zinc fingers. Recognizes and binds to SCL3 promoter sequence 5'-AGACAA-3' to promote its expression when in complex with RGA. This chain is Protein indeterminate-domain 5, chloroplastic, found in Arabidopsis thaliana (Mouse-ear cress).